The sequence spans 444 residues: E3 ubiquitin-protein ligase APD2 (444 aa).

Positions 1-15 are enriched in low complexity; sequence MSLPDSLPSSSSSPP. The interval 1–41 is disordered; sequence MSLPDSLPSSSSSPPVTREETGFHRFEHHGNDSGFDHRDRP. Basic and acidic residues predominate over residues 17–41; it reads TREETGFHRFEHHGNDSGFDHRDRP. Helical transmembrane passes span 74–94 and 312–332; these read VVVVATFCIFVSMTLILGLYG and IAYIVCMGVVTALLLIVSSLF. The segment at 393–432 adopts an RING-type zinc-finger fold; the sequence is CAICYDAPRDCFFLSCGHCVACFQCGTRIAETSGFCPVCR.

In terms of assembly, interacts with At1g78040, At1g10650, VHA-c4/AVAP4, VHA-c''2/VMA16 and TUFA. Expressed in the shoot apical meristems (SAM), root tips, pollen and inflorescences.

Its subcellular location is the endomembrane system. It carries out the reaction S-ubiquitinyl-[E2 ubiquitin-conjugating enzyme]-L-cysteine + [acceptor protein]-L-lysine = [E2 ubiquitin-conjugating enzyme]-L-cysteine + N(6)-ubiquitinyl-[acceptor protein]-L-lysine.. It participates in protein modification; protein ubiquitination. Exhibits E2-dependent E3 ligase activity. Involved in pollen mitosis II (PMII) regulation during male gametogenesis. This is E3 ubiquitin-protein ligase APD2 from Arabidopsis thaliana (Mouse-ear cress).